Reading from the N-terminus, the 279-residue chain is S-methyl-5'-thioadenosine phosphorylase (279 aa).

Phosphate contacts are provided by residues Ser-13, 55-56, and 88-89; these read RH and TA. A substrate-binding site is contributed by Met-191. Position 192 (Thr-192) interacts with phosphate. Residue 215 to 217 coordinates substrate; the sequence is DYD.

This sequence belongs to the PNP/MTAP phosphorylase family. MTAP subfamily. As to quaternary structure, homotrimer.

Its subcellular location is the cytoplasm. It is found in the nucleus. It carries out the reaction S-methyl-5'-thioadenosine + phosphate = 5-(methylsulfanyl)-alpha-D-ribose 1-phosphate + adenine. The protein operates within amino-acid biosynthesis; L-methionine biosynthesis via salvage pathway; S-methyl-5-thio-alpha-D-ribose 1-phosphate from S-methyl-5'-thioadenosine (phosphorylase route): step 1/1. Catalyzes the reversible phosphorylation of S-methyl-5'-thioadenosine (MTA) to adenine and 5-methylthioribose-1-phosphate. Involved in the breakdown of MTA, a major by-product of polyamine biosynthesis. Responsible for the first step in the methionine salvage pathway after MTA has been generated from S-adenosylmethionine. Has broad substrate specificity with 6-aminopurine nucleosides as preferred substrates. This is S-methyl-5'-thioadenosine phosphorylase from Anopheles darlingi (Mosquito).